A 602-amino-acid chain; its full sequence is Raftlin (602 aa).

Residue glycine 2 is the site of N-myristoyl glycine attachment. Residue cysteine 3 is the site of S-palmitoyl cysteine attachment. Residues 178 to 195 (TPASNNSVQSRDNKNVSN) show a composition bias toward polar residues. 3 disordered regions span residues 178–282 (TPAS…RCSK), 451–495 (KKES…EVTE), and 524–567 (NETA…QSAP). Basic and acidic residues-rich tracts occupy residues 197–209 (PEDH…EKID) and 244–265 (PDCK…REAP). Over residues 468–477 (KPMKKSRKTK) the composition is skewed to basic residues.

The protein belongs to the raftlin family.

It localises to the cell membrane. Functionally, may play a pivotal role in the formation and/or maintenance of lipid rafts. May regulate B-cell antigen receptor-mediated signaling. This Gallus gallus (Chicken) protein is Raftlin (RFTN1).